The sequence spans 438 residues: Histidine--tRNA ligase (438 aa).

It belongs to the class-II aminoacyl-tRNA synthetase family. In terms of assembly, homodimer.

The protein localises to the cytoplasm. It carries out the reaction tRNA(His) + L-histidine + ATP = L-histidyl-tRNA(His) + AMP + diphosphate + H(+). This is Histidine--tRNA ligase from Blochmanniella pennsylvanica (strain BPEN).